Consider the following 174-residue polypeptide: MMKSLFIASTMVLMAFPAFAESTTVKMYEALPTGPGKEVGTVVISEAPGGLHFKVNMEKLTPGYHGFHVHENPSCAPGEKDGKIVPALAAGGHYDPGNTHHHLGPEGDGHMGDLPRLSANADGKVSETVVAPHLKKLAEIKQRSLMVHVGGDNYSDKPEPLGGGGARFACGVIE.

The signal sequence occupies residues Met1 to Ala20. Cu cation contacts are provided by His68, His70, and His93. An intrachain disulfide couples Cys75 to Cys170. Zn(2+) contacts are provided by His93, His102, His110, and Asp113. Position 148 (His148) interacts with Cu cation.

It belongs to the Cu-Zn superoxide dismutase family. Homodimer. Cu cation serves as cofactor. Requires Zn(2+) as cofactor.

Its subcellular location is the periplasm. It catalyses the reaction 2 superoxide + 2 H(+) = H2O2 + O2. Destroys radicals which are normally produced within the cells and which are toxic to biological systems. This is Superoxide dismutase [Cu-Zn] (sodC) from Brucella melitensis biotype 1 (strain ATCC 23456 / CCUG 17765 / NCTC 10094 / 16M).